The following is a 289-amino-acid chain: Glycine--tRNA ligase alpha subunit (289 aa).

The protein belongs to the class-II aminoacyl-tRNA synthetase family. As to quaternary structure, tetramer of two alpha and two beta subunits.

It is found in the cytoplasm. It carries out the reaction tRNA(Gly) + glycine + ATP = glycyl-tRNA(Gly) + AMP + diphosphate. In Rickettsia bellii (strain OSU 85-389), this protein is Glycine--tRNA ligase alpha subunit.